The following is a 419-amino-acid chain: Gamma-glutamyl phosphate reductase (419 aa).

It belongs to the gamma-glutamyl phosphate reductase family.

The protein resides in the cytoplasm. The catalysed reaction is L-glutamate 5-semialdehyde + phosphate + NADP(+) = L-glutamyl 5-phosphate + NADPH + H(+). Its pathway is amino-acid biosynthesis; L-proline biosynthesis; L-glutamate 5-semialdehyde from L-glutamate: step 2/2. Catalyzes the NADPH-dependent reduction of L-glutamate 5-phosphate into L-glutamate 5-semialdehyde and phosphate. The product spontaneously undergoes cyclization to form 1-pyrroline-5-carboxylate. This chain is Gamma-glutamyl phosphate reductase, found in Caldicellulosiruptor saccharolyticus (strain ATCC 43494 / DSM 8903 / Tp8T 6331).